The chain runs to 207 residues: Claudin-11 (207 aa).

A topological domain (cytoplasmic) is located at residue M1. The helical transmembrane segment at 2–22 (VATCLQVVGFVTSFVGWIGII) threads the bilayer. Over 23 to 82 (VTTSTNDWVVTCGYTIPTCRKLDELGSKGLWADCVMATGLYHCKPLVDILILPGYVQACR) the chain is Extracellular. The chain crosses the membrane as a helical span at residues 83–103 (ALMIAASVLGLPAILLLLTVL). Residues 104 to 122 (PCIRMGHEPGVAKYRRAQL) lie on the Cytoplasmic side of the membrane. The chain crosses the membrane as a helical span at residues 123–143 (AGVMLVLVALCAMVATIWFPV). Topologically, residues 144-157 (CAHRETTIVSFGYS) are extracellular. The helical transmembrane segment at 158 to 178 (LYAGWIGAVLCLVGGCVIVCC) threads the bilayer. Topologically, residues 179-207 (AGDAQAFGENRFYYSSGSSSPTHAKSAHV) are cytoplasmic. Residues S193, S194, S197, and S198 each carry the phosphoserine modification.

It belongs to the claudin family. Interacts with tetraspanin-3/TSPAN3. Interacts with OCLN.

The protein resides in the cell junction. The protein localises to the tight junction. Its subcellular location is the cell membrane. Its function is as follows. Plays a major role in tight junction-specific obliteration of the intercellular space, through calcium-independent cell-adhesion activity. This is Claudin-11 (CLDN11) from Bos taurus (Bovine).